The following is a 600-amino-acid chain: Copine-A (600 aa).

C2 domains follow at residues 1–111 (MNLK…TVCL) and 116–246 (KSGK…NVIN). Ca(2+) contacts are provided by Asp23, Asp29, Asp82, Asp84, Asp89, Asp151, Asp158, Asp215, Asp217, and Asp223. The VWFA domain occupies 286–503 (NLIVGIDCTA…ELAAEVLREI (218 aa)). A compositionally biased stretch (low complexity) spans 535–549 (YDNPTTTTTATSPST). The disordered stretch occupies residues 535–583 (YDNPTTTTTATSPSTGIDLNKGSNVGLNLTKTESSPSPSGGAGIDLNKG). Over residues 555–572 (KGSNVGLNLTKTESSPSP) the composition is skewed to polar residues.

The protein belongs to the copine family. Ca(2+) is required as a cofactor.

Its subcellular location is the cytoplasm. It is found in the membrane. Its function is as follows. Required for cytokinesis, contractile vacuole function and development. This is Copine-A (cpnA) from Dictyostelium discoideum (Social amoeba).